Consider the following 221-residue polypeptide: NIP3 homolog (221 aa).

Residues 24–55 (GEKTDESVQPQQQTEQSSAQQTTPSAKAVSNP) form a disordered region. A Glycyl lysine isopeptide (Lys-Gly) (interchain with G-Cter in ubiquitin) cross-link involves residue Lys-26. The segment covering 32–49 (QPQQQTEQSSAQQTTPSA) has biased composition (low complexity). The chain crosses the membrane as a helical span at residues 189 to 209 (VVFGFLVTNIFSFVVGAAVGF). The required for initiation of apoptosis stretch occupies residues 189 to 209 (VVFGFLVTNIFSFVVGAAVGF).

This sequence belongs to the NIP3 family. As to quaternary structure, homodimer; via transmembrane domain. Interacts with ced-3 and ced-9. Ubiquitinated and degraded by the proteasome. Under oxidative stress conditions, ubiquitinated at Lys-26 in a pink-1 dependent manner. Colocalizes with pdr-1 and may be ubiquitinated by it. Expressed in all somatic tissues including neurons, pharynx, intestine, body wall muscles and vulva muscles.

It localises to the mitochondrion outer membrane. Its function is as follows. Initiates apoptosis in a BH3-independent mechanism possibly by recruiting ced-3 to mitochondria and other cytoplasmic membranes. Has a role in lifespan and tumor growth. Required for the induction of mitophagy under stress conditions. The polypeptide is NIP3 homolog (Caenorhabditis elegans).